We begin with the raw amino-acid sequence, 448 residues long: 3-phosphoshikimate 1-carboxyvinyltransferase (448 aa).

Residues Lys-38, Ser-39, and Arg-43 each coordinate 3-phosphoshikimate. Lys-38 is a binding site for phosphoenolpyruvate. Phosphoenolpyruvate contacts are provided by Gly-111 and Arg-140. Residues Ser-185, Gln-187, Asp-335, and Lys-362 each contribute to the 3-phosphoshikimate site. Residue Gln-187 coordinates phosphoenolpyruvate. The active-site Proton acceptor is Asp-335. The phosphoenolpyruvate site is built by Arg-366 and Arg-408.

The protein belongs to the EPSP synthase family. In terms of assembly, monomer.

Its subcellular location is the cytoplasm. The enzyme catalyses 3-phosphoshikimate + phosphoenolpyruvate = 5-O-(1-carboxyvinyl)-3-phosphoshikimate + phosphate. Its pathway is metabolic intermediate biosynthesis; chorismate biosynthesis; chorismate from D-erythrose 4-phosphate and phosphoenolpyruvate: step 6/7. Its function is as follows. Catalyzes the transfer of the enolpyruvyl moiety of phosphoenolpyruvate (PEP) to the 5-hydroxyl of shikimate-3-phosphate (S3P) to produce enolpyruvyl shikimate-3-phosphate and inorganic phosphate. In Gloeothece citriformis (strain PCC 7424) (Cyanothece sp. (strain PCC 7424)), this protein is 3-phosphoshikimate 1-carboxyvinyltransferase.